The following is a 465-amino-acid chain: ATP-dependent rRNA helicase rrp3 (465 aa).

The tract at residues 1–46 (MSALKKRKITEKQPETNSDSEAESVSSRGSAKDETQTSGEEPAPAK) is disordered. Residues 15-29 (ETNSDSEAESVSSRG) show a composition bias toward polar residues. Positions 46–74 (KSFKELGIIDQLCEACENMGYKAPTPIQS) match the Q motif motif. The Helicase ATP-binding domain occupies 77–248 (IPLALEGRDV…RASLSNPVRV (172 aa)). 90 to 97 (AETGSGKT) contacts ATP. Residues 196-199 (DEAD) carry the DEAD box motif. One can recognise a Helicase C-terminal domain in the interval 275–419 (YLVYLLNEFA…EYQVEKDEVM (145 aa)). The tract at residues 436–465 (MKSFDEKKGARGKKFGKGKRSRDDMDQEEG) is disordered. The segment covering 445–455 (ARGKKFGKGKR) has biased composition (basic residues).

It belongs to the DEAD box helicase family. DDX47/RRP3 subfamily. As to quaternary structure, interacts with the SSU processome.

The protein resides in the nucleus. It carries out the reaction ATP + H2O = ADP + phosphate + H(+). ATP-dependent rRNA helicase required for pre-ribosomal RNA processing. Involved in the maturation of the 35S-pre-rRNA and to its cleavage to mature 18S rRNA. In Emericella nidulans (strain FGSC A4 / ATCC 38163 / CBS 112.46 / NRRL 194 / M139) (Aspergillus nidulans), this protein is ATP-dependent rRNA helicase rrp3.